We begin with the raw amino-acid sequence, 660 residues long: UvrABC system protein B (660 aa).

Residues 27-414 enclose the Helicase ATP-binding domain; that stretch reads NGVNEGKRHQ…TDEMVQQIIR (388 aa). Residue 40–47 coordinates ATP; the sequence is GATGTGKT. The Beta-hairpin motif lies at 93–116; that stretch reads YYDYYQPEAYVPSTDTFIEKDASI. One can recognise a Helicase C-terminal domain in the interval 431 to 593; the sequence is QIDDLLGEIQ…ITPTTINKKI (163 aa). Positions 603-622 are disordered; sequence NDETNEQQQTEVPKKMTKKE. Residues 624–659 form the UVR domain; that stretch reads EKTIANIEKEMKQAAKDLDFEKATELRDMLFELKAE.

It belongs to the UvrB family. In terms of assembly, forms a heterotetramer with UvrA during the search for lesions. Interacts with UvrC in an incision complex.

The protein resides in the cytoplasm. Functionally, the UvrABC repair system catalyzes the recognition and processing of DNA lesions. A damage recognition complex composed of 2 UvrA and 2 UvrB subunits scans DNA for abnormalities. Upon binding of the UvrA(2)B(2) complex to a putative damaged site, the DNA wraps around one UvrB monomer. DNA wrap is dependent on ATP binding by UvrB and probably causes local melting of the DNA helix, facilitating insertion of UvrB beta-hairpin between the DNA strands. Then UvrB probes one DNA strand for the presence of a lesion. If a lesion is found the UvrA subunits dissociate and the UvrB-DNA preincision complex is formed. This complex is subsequently bound by UvrC and the second UvrB is released. If no lesion is found, the DNA wraps around the other UvrB subunit that will check the other stand for damage. The protein is UvrABC system protein B of Staphylococcus saprophyticus subsp. saprophyticus (strain ATCC 15305 / DSM 20229 / NCIMB 8711 / NCTC 7292 / S-41).